Here is a 294-residue protein sequence, read N- to C-terminus: Deubiquitinase OTUD6B (294 aa).

Disordered regions lie at residues 1 to 46 (MDEA…RKQL) and 67 to 120 (AFAQ…ERDE). Composition is skewed to polar residues over residues 27 to 36 (KIQSMKNSVP) and 73 to 86 (PEPT…NGVT). Basic and acidic residues predominate over residues 111-120 (KAAQEKERDE). An OTU domain is found at 150–287 (LQIRQIPSDG…GEHYNSVELL (138 aa)). Residues 155–161 (IPSDGHC) are cys-loop. Aspartate 158 is an active-site residue. The active-site Nucleophile is the cysteine 161. The segment at 222-232 (IVNTPAWGGQL) is variable-loop. Positions 270–280 (YMRHAYGLGEH) are his-loop. Histidine 280 is an active-site residue.

The catalysed reaction is Thiol-dependent hydrolysis of ester, thioester, amide, peptide and isopeptide bonds formed by the C-terminal Gly of ubiquitin (a 76-residue protein attached to proteins as an intracellular targeting signal).. Deubiquitinating enzyme that may play a role in the ubiquitin-dependent regulation of different cellular processes. This Xenopus tropicalis (Western clawed frog) protein is Deubiquitinase OTUD6B (otud6b).